Consider the following 438-residue polypeptide: Anaerobic glycerol-3-phosphate dehydrogenase subunit B (438 aa).

It belongs to the anaerobic G-3-P dehydrogenase subunit B family. As to quaternary structure, composed of a catalytic GlpA/B dimer and of membrane bound GlpC. FMN serves as cofactor.

It catalyses the reaction a quinone + sn-glycerol 3-phosphate = dihydroxyacetone phosphate + a quinol. It participates in polyol metabolism; glycerol degradation via glycerol kinase pathway; glycerone phosphate from sn-glycerol 3-phosphate (anaerobic route): step 1/1. Its function is as follows. Conversion of glycerol 3-phosphate to dihydroxyacetone. Uses fumarate or nitrate as electron acceptor. In Vibrio vulnificus (strain CMCP6), this protein is Anaerobic glycerol-3-phosphate dehydrogenase subunit B.